The sequence spans 196 residues: MSRYRGPRLKKIRRLGALPGLTRKTPKSGSNLKKKFHSGKKEQYRIRLQEKQKLRFHYGLTERQLLRYVHIAGKAKRSTGQVLLQLLEMRLDNILFRLGMASTIPGARQLVNHRHILVNGRIVNIPSFRCKPRDIITTKDNQRSKGLVQNYIASSDPGKLPKHLTIDTLEYKGLVNKILDRKWVGLKINELLVVEY.

A disordered region spans residues 17–36; that stretch reads ALPGLTRKTPKSGSNLKKKF. Residues 89-157 form the S4 RNA-binding domain; that stretch reads MRLDNILFRL…VQNYIASSDP (69 aa).

It belongs to the universal ribosomal protein uS4 family. As to quaternary structure, part of the 30S ribosomal subunit. Contacts protein S5. The interaction surface between S4 and S5 is involved in control of translational fidelity.

The protein resides in the plastid. Its subcellular location is the chloroplast. In terms of biological role, one of the primary rRNA binding proteins, it binds directly to 16S rRNA where it nucleates assembly of the body of the 30S subunit. With S5 and S12 plays an important role in translational accuracy. The chain is Small ribosomal subunit protein uS4c (rps4) from Calamagrostis epigeios (Wood small-reed grass).